The following is a 192-amino-acid chain: A-type ATP synthase subunit E (192 aa).

The protein belongs to the V-ATPase E subunit family. As to quaternary structure, has multiple subunits with at least A(3), B(3), C, D, E, F, H, I and proteolipid K(x).

The protein localises to the cell membrane. In terms of biological role, component of the A-type ATP synthase that produces ATP from ADP in the presence of a proton gradient across the membrane. In Sulfolobus acidocaldarius (strain ATCC 33909 / DSM 639 / JCM 8929 / NBRC 15157 / NCIMB 11770), this protein is A-type ATP synthase subunit E.